Here is a 971-residue protein sequence, read N- to C-terminus: Isoleucine--tRNA ligase (971 aa).

The 'HIGH' region signature appears at 64–74 (PYANGHIHIGH). Position 602 (Glu602) interacts with L-isoleucyl-5'-AMP. Positions 643–647 (KMSKS) match the 'KMSKS' region motif. Lys646 is a binding site for ATP.

Belongs to the class-I aminoacyl-tRNA synthetase family. IleS type 1 subfamily. Monomer.

It is found in the cytoplasm. It carries out the reaction tRNA(Ile) + L-isoleucine + ATP = L-isoleucyl-tRNA(Ile) + AMP + diphosphate. Catalyzes the attachment of isoleucine to tRNA(Ile). As IleRS can inadvertently accommodate and process structurally similar amino acids such as valine, to avoid such errors it has two additional distinct tRNA(Ile)-dependent editing activities. One activity is designated as 'pretransfer' editing and involves the hydrolysis of activated Val-AMP. The other activity is designated 'posttransfer' editing and involves deacylation of mischarged Val-tRNA(Ile). The sequence is that of Isoleucine--tRNA ligase from Bartonella quintana (strain Toulouse) (Rochalimaea quintana).